Here is a 912-residue protein sequence, read N- to C-terminus: Coatomer subunit beta (912 aa).

HEAT repeat units follow at residues 59–96 (PIPQ…THLG), 100–135 (SEMI…REAE), 136–172 (VLEP…HFDY), 244–281 (SERS…APTA), 300–337 (NVKM…PNID), 339–375 (CKKV…KEFD), 397–434 (EVLG…TYPS), 441–479 (KKLI…AMTS), 550–575 (LKAQ…TSKS), and 576–612 (AYER…YLKY).

In terms of assembly, oligomeric complex that consists of at least the alpha, beta, beta', gamma, delta, epsilon and zeta subunits.

It is found in the cytoplasm. It localises to the golgi apparatus membrane. The protein localises to the cytoplasmic vesicle. Its subcellular location is the COPI-coated vesicle membrane. The coatomer is a cytosolic protein complex that binds to dilysine motifs and reversibly associates with Golgi non-clathrin-coated vesicles, which further mediate biosynthetic protein transport from the ER, via the Golgi up to the trans Golgi network. Coatomer complex is required for budding from Golgi membranes, and is essential for the retrograde Golgi-to-ER transport of dilysine-tagged proteins. In Dictyostelium discoideum (Social amoeba), this protein is Coatomer subunit beta (copb).